We begin with the raw amino-acid sequence, 567 residues long: Organic cation transporter-like protein (567 aa).

At 1-21 (MGYDEAIIHLGDFGRYQKIIY) the chain is on the cytoplasmic side. Residues 22–42 (FLICLTSIPVAFHKLAGVFLL) form a helical membrane-spanning segment. Over 43 to 127 (AKPDFRCALP…TEWNLVCGRD (85 aa)) the chain is Extracellular. N-linked (GlcNAc...) asparagine glycosylation is found at N55, N67, N89, and N97. Residues 128 to 148 (FMAATSDSLFMLGVLLGSIVF) form a helical membrane-spanning segment. Topologically, residues 149-158 (GQLSDKYGRK) are cytoplasmic. Residues 159-179 (PILFASLVIQVLFGVLAGVAP) traverse the membrane as a helical segment. The Extracellular segment spans residues 180 to 189 (EYFTYTFARL). A helical membrane pass occupies residues 190-210 (MVGATTSGVFLVAYVVAMEMV). Residues 211–219 (GPDKRLYAG) are Cytoplasmic-facing. The chain crosses the membrane as a helical span at residues 220–240 (IFVMMFFSVGFMLTAVFAYFV). Topologically, residues 241–244 (HDWR) are extracellular. The chain crosses the membrane as a helical span at residues 245–265 (WLQIALTLPGLIFMFYYWIIP). Over 266–343 (ESARWLLLKG…LFCYPNLRRK (78 aa)) the chain is Cytoplasmic. The disordered stretch occupies residues 304–326 (LDEGENSEEKAKQKLEDQELDEG). Basic and acidic residues predominate over residues 310–320 (SEEKAKQKLED). A helical membrane pass occupies residues 344–364 (TLLIFLDWLVTSGVYYGLSWN). The Extracellular segment spans residues 365–371 (TSNLGGN). Residues 372-392 (VLLNFVISGAVEIPAYIFLLL) form a helical membrane-spanning segment. Residues 393–400 (TLNRWGRR) are Cytoplasmic-facing. A helical transmembrane segment spans residues 401-421 (SILCGCLVMAGLSLLATVIIP). Residues 422–427 (QRMHTL) lie on the Extracellular side of the membrane. The chain crosses the membrane as a helical span at residues 428–448 (IVACAMLGKLAITASYGTVYI). Residues 449–462 (FSAEQFPTVVRNVA) are Cytoplasmic-facing. The chain crosses the membrane as a helical span at residues 463–483 (LGAASMVARISGMMAPFLNFL). Residues 484–489 (ATIWKP) are Extracellular-facing. The chain crosses the membrane as a helical span at residues 490–510 (LPLLICGSLTLVAGLLSLLLP). Topologically, residues 511–567 (ETHNKPMLETIADGERFGKKTKADVYLETGQELRAPEAQPLKGSGETNGSTIANGHK) are cytoplasmic. Positions 546-567 (PEAQPLKGSGETNGSTIANGHK) are disordered. A compositionally biased stretch (polar residues) spans 555–567 (GETNGSTIANGHK).

This sequence belongs to the major facilitator (TC 2.A.1) superfamily. Organic cation transporter (TC 2.A.1.19) family.

It localises to the membrane. Probably transports organic cations. The chain is Organic cation transporter-like protein (Orct2) from Drosophila melanogaster (Fruit fly).